The following is a 749-amino-acid chain: Cytosolic phospholipase A2 (749 aa).

The region spanning 1–124 (MASIDPYQHI…GEKKQVPFTF (124 aa)) is the C2 domain. The interval 1-178 (MASIDPYQHI…LRKLLGPEKT (178 aa)) is phospholipid binding. Residues Asp40, Thr41, Asp43, Asn65, Asp93, Ala94, and Asn95 each coordinate Ca(2+). In terms of domain architecture, PLA2c spans 138–740 (VCSSTDLRFS…NDVESRKLHH (603 aa)). Ser229 serves as the catalytic Nucleophile. The interval 428 to 452 (HILGNDSSDSDDEMQEPKGTENAKA) is disordered. Positions 442 to 452 (QEPKGTENAKA) are enriched in basic and acidic residues. Asp549 (proton acceptor) is an active-site residue. The tract at residues 729 to 749 (SLNDVESRKLHHKDSQSKFQM) is disordered. The segment covering 733–749 (VESRKLHHKDSQSKFQM) has biased composition (basic and acidic residues).

It is found in the cytoplasm. It localises to the cytoplasmic vesicle. It catalyses the reaction a 1,2-diacyl-sn-glycero-3-phosphocholine + H2O = a 1-acyl-sn-glycero-3-phosphocholine + a fatty acid + H(+). The enzyme catalyses a 1-acyl-sn-glycero-3-phosphocholine + H2O = sn-glycerol 3-phosphocholine + a fatty acid + H(+). Stimulated by agonists such as ATP, EGF, thrombin and bradykinin as well as by cytosolic Ca(2+). Selectively hydrolyzes arachidonyl phospholipids in the sn-2 position releasing arachidonic acid. Together with its lysophospholipid activity, it is implicated in the initiation of the inflammatory response. The chain is Cytosolic phospholipase A2 (pla2g4a) from Xenopus laevis (African clawed frog).